The primary structure comprises 98 residues: YcgL domain-containing protein CJA_2437 (98 aa).

Residues 3–87 enclose the YcgL domain; the sequence is IIAEIYRSPK…RDLVDAEAKR (85 aa).

This Cellvibrio japonicus (strain Ueda107) (Pseudomonas fluorescens subsp. cellulosa) protein is YcgL domain-containing protein CJA_2437.